The primary structure comprises 524 residues: Putative ATP-dependent RNA helicase R458 (524 aa).

The region spanning 125 to 338 (VPELIQRKDT…NSYFRKYSPI (214 aa)) is the Helicase ATP-binding domain. Position 138–145 (138–145 (FKSGTGKT)) interacts with ATP. Positions 268 to 271 (DEFD) match the DEFD box motif. The region spanning 373 to 524 (IILDLLKQCR…QLPGDLSTLL (152 aa)) is the Helicase C-terminal domain.

The protein belongs to the DEAD box helicase family. eIF4A subfamily.

It carries out the reaction ATP + H2O = ADP + phosphate + H(+). Functionally, putative ATP-dependent RNA helicase. This is Putative ATP-dependent RNA helicase R458 from Acanthamoeba polyphaga mimivirus (APMV).